Here is a 237-residue protein sequence, read N- to C-terminus: 1-(5-phosphoribosyl)-5-[(5-phosphoribosylamino)methylideneamino] imidazole-4-carboxamide isomerase (237 aa).

D8 (proton acceptor) is an active-site residue. D130 functions as the Proton donor in the catalytic mechanism.

The protein belongs to the HisA/HisF family.

The protein localises to the cytoplasm. The enzyme catalyses 1-(5-phospho-beta-D-ribosyl)-5-[(5-phospho-beta-D-ribosylamino)methylideneamino]imidazole-4-carboxamide = 5-[(5-phospho-1-deoxy-D-ribulos-1-ylimino)methylamino]-1-(5-phospho-beta-D-ribosyl)imidazole-4-carboxamide. It participates in amino-acid biosynthesis; L-histidine biosynthesis; L-histidine from 5-phospho-alpha-D-ribose 1-diphosphate: step 4/9. This is 1-(5-phosphoribosyl)-5-[(5-phosphoribosylamino)methylideneamino] imidazole-4-carboxamide isomerase from Halothermothrix orenii (strain H 168 / OCM 544 / DSM 9562).